Here is a 927-residue protein sequence, read N- to C-terminus: Echinoderm microtubule-associated protein-like 4 (927 aa).

The interval 1 to 189 is microtubule-binding; sequence MDGFAGSLDD…IPSDVENYDD (189 aa). Positions 14–63 form a coiled coil; that stretch reads AASTSDVQDRLSALELRVQQQEDEITVLKAALADVLRRLAISEDQVATVR. Positions 85–132 are disordered; that stretch reads NGGAGTRKPSHASSVAKKDTLSSAAKSVKRSSTLEKSHNSWDASEESR. Over residues 116–132 the composition is skewed to basic and acidic residues; the sequence is STLEKSHNSWDASEESR. WD repeat units lie at residues 199–237, 241–288, 296–336, 343–378, 385–424, 442–480, 485–521, 524–563, 567–604, 610–646, 653–692, 702–760, and 767–806; these read LKLE…LFNY, TQRH…VWDS, VIGL…VWDW, AEIK…FWTW, RKQG…IWSK, QISK…MWDH, EREI…LRGT, DGFQ…LWNS, SLEW…VLDA, VSIH…LYNV, YSRY…YWDI, RSEC…LFQY, and APSH…QWRL. Residues 815-829 show a composition bias toward polar residues; the sequence is NDNIAESSSAVNSPV. The segment at 815-927 is disordered; sequence NDNIAESSSA…NQDDDDAPLS (113 aa). Residues 914 to 927 are compositionally biased toward acidic residues; sequence AQDENQDDDDAPLS.

This sequence belongs to the WD repeat EMAP family. Homotrimer; self-association is mediated by the N-terminal coiled coil.

It localises to the cytoplasm. Its subcellular location is the cytoskeleton. The protein localises to the spindle. It is found in the microtubule organizing center. The protein resides in the midbody. Functionally, essential for the formation and stability of microtubules (MTs). Required for the organization of the mitotic spindle and for the proper attachment of kinetochores to MTs. Promotes the recruitment of NUDC to the mitotic spindle for mitotic progression. This is Echinoderm microtubule-associated protein-like 4 (eml4) from Xenopus laevis (African clawed frog).